The sequence spans 266 residues: Large ribosomal subunit protein uL3 (266 aa).

Residues 124–149 (NQKIGPKSHGGGGGSKPVRQTGSLGD) are disordered.

Belongs to the universal ribosomal protein uL3 family. Part of the 50S ribosomal subunit. Forms a cluster with proteins L14 and L19.

One of the primary rRNA binding proteins, it binds directly near the 3'-end of the 23S rRNA, where it nucleates assembly of the 50S subunit. This chain is Large ribosomal subunit protein uL3, found in Mycoplasmopsis pulmonis (strain UAB CTIP) (Mycoplasma pulmonis).